A 668-amino-acid polypeptide reads, in one-letter code: Eukaryotic translation initiation factor 3 subunit L (668 aa).

Residues 1–17 (MVADASQQGQSNGAAFN) show a composition bias toward polar residues. The segment at 1 to 42 (MVADASQQGQSNGAAFNQQQQYQQQQQRQLFGGEEEFGDEEE) is disordered. The span at 18–32 (QQQQYQQQQQRQLFG) shows a compositional bias: low complexity. Residues 33–42 (GEEEFGDEEE) are compositionally biased toward acidic residues. Residues 358-552 (SFTHILVFIM…QVVNTSDLDF (195 aa)) enclose the PCI domain. The disordered stretch occupies residues 625 to 668 (AGVKAGPPAFSQRSGGAGRSSVNKSAPAPAGAWGSSKPQPSVTA). Residues 648–662 (KSAPAPAGAWGSSKP) show a composition bias toward low complexity.

The protein belongs to the eIF-3 subunit L family. As to quaternary structure, component of the eukaryotic translation initiation factor 3 (eIF-3) complex.

The protein resides in the cytoplasm. Its function is as follows. Component of the eukaryotic translation initiation factor 3 (eIF-3) complex, which is involved in protein synthesis of a specialized repertoire of mRNAs and, together with other initiation factors, stimulates binding of mRNA and methionyl-tRNAi to the 40S ribosome. The eIF-3 complex specifically targets and initiates translation of a subset of mRNAs involved in cell proliferation. This is Eukaryotic translation initiation factor 3 subunit L from Mycosarcoma maydis (Corn smut fungus).